Here is a 372-residue protein sequence, read N- to C-terminus: B2 bradykinin receptor (372 aa).

Residues Met1–Gln34 lie on the Extracellular side of the membrane. Asn3 and Asn12 each carry an N-linked (GlcNAc...) asparagine glycan. The helical transmembrane segment at Ala35–Leu58 threads the bilayer. Residues His59 to Glu67 are Cytoplasmic-facing. A helical transmembrane segment spans residues Ile68–Ala92. Topologically, residues Asn93–Arg105 are extracellular. Cys104 and Cys185 are disulfide-bonded. Residues Met106–Ile127 form a helical membrane-spanning segment. Residues Asp128–Lys149 lie on the Cytoplasmic side of the membrane. Tyr130 carries the post-translational modification Phosphotyrosine. A helical transmembrane segment spans residues Leu150–Met172. Residues Lys173 to Gln195 are Extracellular-facing. N-linked (GlcNAc...) asparagine glycosylation is present at Asn181. A helical membrane pass occupies residues Val196 to Met222. At Gln223 to Arg241 the chain is on the cytoplasmic side. Residues Ala242–Leu266 traverse the membrane as a helical segment. Residues Asp267–Asp284 lie on the Extracellular side of the membrane. The helical transmembrane segment at Leu285 to Val308 threads the bilayer. Residues Gly309–Ser364 are Cytoplasmic-facing. Tyr320 is modified (phosphotyrosine). A lipid anchor (S-palmitoyl cysteine) is attached at Cys324. Ser339 is subject to Phosphoserine. Thr342 carries the post-translational modification Phosphothreonine. A phosphoserine; by GRK6 mark is found at Ser346 and Ser348.

Belongs to the G-protein coupled receptor 1 family. Bradykinin receptor subfamily. BDKRB2 sub-subfamily. In terms of assembly, forms a complex with PECAM1 and GNAQ. Interacts with PECAM1.

The protein localises to the cell membrane. In terms of biological role, receptor for bradykinin. It is associated with G proteins that activate a phosphatidylinositol-calcium second messenger system. This chain is B2 bradykinin receptor (BDKRB2), found in Cavia porcellus (Guinea pig).